The sequence spans 449 residues: MSALTESFGPVPSAKSKPPAARKPWYKLLYLQVLVAIVLGVLLGWLSPHIATNEWVKALGDGFVKLIKMVIAPIIFCTVVSGIAHIQDARKVGRVGVKALLYFEVVSSFALLIGLVVGNVVQIGHGLGATGDAAAVSKYVKQAEAQHSVDFVLNIIPDSVVGAFAKGDILQVLLFAILFGFALMTLGERGHRLRDVIDDASHAVFGVIAIVMKAAPVGAFGAMAFTIGKFGPAALGNLIGLIAVFYITAALFVVLVLGLIAKIVGFNIFKFLKYIKDELLIVLGTSSSESALPQLMEKLERLGCSKSVVGLVVPTGYSFNLDGTNIYMTLATLFIAQALGVDLTWTEQLTILLVAMLTSKGASGVSGAGFITLAATLSVVNPALVPGMAIVFSVDKFMSEVRALTNITGNGVATVFVSWWENELDHDKLAAALNKTIDPSDIETAVTTG.

Residues 1-20 form a disordered region; that stretch reads MSALTESFGPVPSAKSKPPA. Over residues 10–20 the composition is skewed to low complexity; the sequence is PVPSAKSKPPA. Helical transmembrane passes span 28–48, 66–86, 101–121, 167–187, 205–225, 241–261, 326–346, and 370–390; these read LLYL…WLSP, LIKM…IAHI, LYFE…GNVV, GDIL…MTLG, FGVI…AMAF, LIAV…GLIA, IYMT…LTWT, and FITL…GMAI.

The protein belongs to the dicarboxylate/amino acid:cation symporter (DAACS) (TC 2.A.23) family.

The protein localises to the cell inner membrane. Functionally, responsible for the transport of dicarboxylates such as succinate, fumarate, and malate from the periplasm across the membrane. This is C4-dicarboxylate transport protein from Rhodopseudomonas palustris (strain BisB18).